A 349-amino-acid polypeptide reads, in one-letter code: Hydroxymethylglutaryl-CoA synthase (349 aa).

Asp30 lines the (3S)-3-hydroxy-3-methylglutaryl-CoA pocket. Residue Glu82 is the Proton donor/acceptor of the active site. Cys114 contributes to the (3S)-3-hydroxy-3-methylglutaryl-CoA binding site. Cys114 functions as the Acyl-thioester intermediate in the catalytic mechanism. Arg203 lines the CoA pocket. Residues Thr205 and His238 each contribute to the (3S)-3-hydroxy-3-methylglutaryl-CoA site. The active-site Proton donor/acceptor is His238. Position 243 (Lys243) interacts with CoA. The (3S)-3-hydroxy-3-methylglutaryl-CoA site is built by Lys247, Asn270, and Ser300.

This sequence belongs to the thiolase-like superfamily. Archaeal HMG-CoA synthase family. Interacts with acetoacetyl-CoA thiolase that catalyzes the precedent step in the pathway and with a DUF35 protein. The acetoacetyl-CoA thiolase/HMG-CoA synthase complex channels the intermediate via a fused CoA-binding site, which allows for efficient coupling of the endergonic thiolase reaction with the exergonic HMGCS reaction.

The catalysed reaction is acetoacetyl-CoA + acetyl-CoA + H2O = (3S)-3-hydroxy-3-methylglutaryl-CoA + CoA + H(+). The protein operates within metabolic intermediate biosynthesis; (R)-mevalonate biosynthesis; (R)-mevalonate from acetyl-CoA: step 2/3. Its function is as follows. Catalyzes the condensation of acetyl-CoA with acetoacetyl-CoA to form 3-hydroxy-3-methylglutaryl-CoA (HMG-CoA). Functions in the mevalonate (MVA) pathway leading to isopentenyl diphosphate (IPP), a key precursor for the biosynthesis of isoprenoid compounds that are building blocks of archaeal membrane lipids. The chain is Hydroxymethylglutaryl-CoA synthase from Methanothermococcus thermolithotrophicus (Methanococcus thermolithotrophicus).